The sequence spans 513 residues: Lysine--tRNA ligase (513 aa).

2 residues coordinate Mg(2+): E423 and E430.

It belongs to the class-II aminoacyl-tRNA synthetase family. In terms of assembly, homodimer. The cofactor is Mg(2+).

Its subcellular location is the cytoplasm. It carries out the reaction tRNA(Lys) + L-lysine + ATP = L-lysyl-tRNA(Lys) + AMP + diphosphate. This is Lysine--tRNA ligase from Anaeromyxobacter dehalogenans (strain 2CP-1 / ATCC BAA-258).